An 86-amino-acid chain; its full sequence is uncharacterized protein (86 aa).

This is an uncharacterized protein from Archaeoglobus fulgidus (strain ATCC 49558 / DSM 4304 / JCM 9628 / NBRC 100126 / VC-16).